The following is a 266-amino-acid chain: 3-methyl-2-oxobutanoate hydroxymethyltransferase 2 (266 aa).

Asp-45 and Asp-84 together coordinate Mg(2+). 3-methyl-2-oxobutanoate is bound by residues 45 to 46 (DS), Asp-84, and Lys-112. Glu-114 is a binding site for Mg(2+). Glu-181 functions as the Proton acceptor in the catalytic mechanism.

This sequence belongs to the PanB family. Homodecamer; pentamer of dimers. Mg(2+) serves as cofactor.

Its subcellular location is the cytoplasm. The catalysed reaction is 3-methyl-2-oxobutanoate + (6R)-5,10-methylene-5,6,7,8-tetrahydrofolate + H2O = 2-dehydropantoate + (6S)-5,6,7,8-tetrahydrofolate. It participates in cofactor biosynthesis; (R)-pantothenate biosynthesis; (R)-pantoate from 3-methyl-2-oxobutanoate: step 1/2. In terms of biological role, catalyzes the reversible reaction in which hydroxymethyl group from 5,10-methylenetetrahydrofolate is transferred onto alpha-ketoisovalerate to form ketopantoate. The protein is 3-methyl-2-oxobutanoate hydroxymethyltransferase 2 of Pseudomonas aeruginosa (strain ATCC 15692 / DSM 22644 / CIP 104116 / JCM 14847 / LMG 12228 / 1C / PRS 101 / PAO1).